Consider the following 244-residue polypeptide: Small ribosomal subunit protein uS2 (244 aa).

Belongs to the universal ribosomal protein uS2 family.

This is Small ribosomal subunit protein uS2 from Endomicrobium trichonymphae.